Reading from the N-terminus, the 321-residue chain is Lipoyl synthase (321 aa).

[4Fe-4S] cluster contacts are provided by cysteine 68, cysteine 73, cysteine 79, cysteine 94, cysteine 98, cysteine 101, and serine 308. In terms of domain architecture, Radical SAM core spans 80–297 (FNHGTATFMI…KAAAMDMGFT (218 aa)).

The protein belongs to the radical SAM superfamily. Lipoyl synthase family. Requires [4Fe-4S] cluster as cofactor.

It is found in the cytoplasm. The catalysed reaction is [[Fe-S] cluster scaffold protein carrying a second [4Fe-4S](2+) cluster] + N(6)-octanoyl-L-lysyl-[protein] + 2 oxidized [2Fe-2S]-[ferredoxin] + 2 S-adenosyl-L-methionine + 4 H(+) = [[Fe-S] cluster scaffold protein] + N(6)-[(R)-dihydrolipoyl]-L-lysyl-[protein] + 4 Fe(3+) + 2 hydrogen sulfide + 2 5'-deoxyadenosine + 2 L-methionine + 2 reduced [2Fe-2S]-[ferredoxin]. It participates in protein modification; protein lipoylation via endogenous pathway; protein N(6)-(lipoyl)lysine from octanoyl-[acyl-carrier-protein]: step 2/2. Its function is as follows. Catalyzes the radical-mediated insertion of two sulfur atoms into the C-6 and C-8 positions of the octanoyl moiety bound to the lipoyl domains of lipoate-dependent enzymes, thereby converting the octanoylated domains into lipoylated derivatives. This Erwinia tasmaniensis (strain DSM 17950 / CFBP 7177 / CIP 109463 / NCPPB 4357 / Et1/99) protein is Lipoyl synthase.